Reading from the N-terminus, the 79-residue chain is Major outer membrane lipoprotein Lpp 2 (79 aa).

The first 21 residues, 1–21, serve as a signal peptide directing secretion; sequence MNRTNKLILGAVVLGSTLLAG. C22 carries the N-palmitoyl cysteine lipid modification. C22 carries S-diacylglycerol cysteine lipidation. 2 repeats span residues 25–35 and 39–49; these read NAKIDQLSSDV and SAKVDQLSNDV. The stretch at 28 to 69 forms a coiled coil; that stretch reads IDQLSSDVQTLSAKVDQLSNDVNAMRSDVQAAKDDAARANQR. N6-murein peptidoglycan lysine is present on K79.

It belongs to the Lpp family. Homotrimer.

It localises to the cell outer membrane. The protein resides in the secreted. Its subcellular location is the cell wall. In terms of biological role, a highly abundant outer membrane lipoprotein that controls the distance between the inner and outer membranes. The only protein known to be covalently linked to the peptidoglycan network (PGN). Also non-covalently binds the PGN. The link between the cell outer membrane and PGN contributes to maintenance of the structural and functional integrity of the cell envelope, and maintains the correct distance between the PGN and the outer membrane. This Salmonella typhi protein is Major outer membrane lipoprotein Lpp 2.